The following is a 199-amino-acid chain: uncharacterized protein (199 aa).

Its subcellular location is the mitochondrion. This is an uncharacterized protein from Schizosaccharomyces pombe (strain 972 / ATCC 24843) (Fission yeast).